The primary structure comprises 731 residues: 1,4-alpha-glucan branching enzyme GlgB (731 aa).

Catalysis depends on aspartate 411, which acts as the Nucleophile. Catalysis depends on glutamate 464, which acts as the Proton donor.

Belongs to the glycosyl hydrolase 13 family. GlgB subfamily. As to quaternary structure, monomer.

The enzyme catalyses Transfers a segment of a (1-&gt;4)-alpha-D-glucan chain to a primary hydroxy group in a similar glucan chain.. Its pathway is glycan biosynthesis; glycogen biosynthesis. In terms of biological role, catalyzes the formation of the alpha-1,6-glucosidic linkages in glycogen by scission of a 1,4-alpha-linked oligosaccharide from growing alpha-1,4-glucan chains and the subsequent attachment of the oligosaccharide to the alpha-1,6 position. The chain is 1,4-alpha-glucan branching enzyme GlgB from Mycolicibacterium paratuberculosis (strain ATCC BAA-968 / K-10) (Mycobacterium paratuberculosis).